The following is a 117-amino-acid chain: Structural toxin peptide sea anemone type 9a (117 aa).

The N-terminal stretch at M1–E23 is a signal peptide. Repeat copies occupy residues T28–E56, K57–V88, and K89–S117. The segment at R29–S117 is 3 X approximate tandem repeats.

Contains 6 disulfide bonds. In terms of tissue distribution, expressed outside of acontia.

It is found in the secreted. The protein localises to the nematocyst. Its function is as follows. Putative neurotoxin. The sequence is that of Structural toxin peptide sea anemone type 9a from Calliactis polypus (Hermit crab anemone).